Consider the following 383-residue polypeptide: Pleckstrin homology domain-containing family A member 1 (383 aa).

PH domains follow at residues 7-112 (QNRI…KAIK) and 191-289 (AVIK…GAIV). Position 284 is a phosphoserine (V284). A disordered region spans residues 362 to 383 (LPRSSQGTSRSRLSLQESQLPK). The segment covering 370–383 (SRSRLSLQESQLPK) has biased composition (low complexity).

In terms of assembly, interacts with MPDZ and PTPN13.

The protein localises to the cytoplasm. Its subcellular location is the cell membrane. The protein resides in the nucleus. Functionally, binds specifically to phosphatidylinositol 3,4-diphosphate (PtdIns3,4P2), but not to other phosphoinositides. May recruit other proteins to the plasma membrane. This Mus musculus (Mouse) protein is Pleckstrin homology domain-containing family A member 1 (Plekha1).